Here is a 104-residue protein sequence, read N- to C-terminus: MIRKAFVMQVNPDAHEEYQRRHNPIWPELEAVLKSHGAHNYAIYLDKARNLLFATVEIESEERWNAVASTEICQRWWKYMTDVMPANPDNSPVSSELQEVFYLP.

Y18 serves as a coordination point for substrate. Residue H22 is the Proton donor of the active site. Substrate-binding positions include Y41 and 76-77; that span reads WW.

This sequence belongs to the rhamnose mutarotase family. In terms of assembly, homodimer.

The protein resides in the cytoplasm. It catalyses the reaction alpha-L-rhamnose = beta-L-rhamnose. It participates in carbohydrate metabolism; L-rhamnose metabolism. In terms of biological role, involved in the anomeric conversion of L-rhamnose. The protein is L-rhamnose mutarotase of Escherichia coli O17:K52:H18 (strain UMN026 / ExPEC).